The chain runs to 300 residues: Cell adhesion molecule CEACAM19 (300 aa).

The first 32 residues, 1–32, serve as a signal peptide directing secretion; the sequence is MEIPMGTQGCFSKSLLLSASILVLWMLQGSQA. Residues 33-157 lie on the Extracellular side of the membrane; it reads ALYIQKIPEQ…PSTHLPTNAG (125 aa). N-linked (GlcNAc...) asparagine glycosylation is present at Asn104. The helical transmembrane segment at 158-178 threads the bilayer; it reads ILAATIIGSLAAGALLISCIA. Residues 179 to 300 are Cytoplasmic-facing; sequence YLLVTRNWRG…APYCQLVPTS (122 aa). The segment at 259–291 is disordered; sequence SINPARPLPTPPHLQAEPENHQYQQDLLNPDPA.

This sequence belongs to the immunoglobulin superfamily. CEA family. Ubiquitous with highest expression in prostate, uterus, fetal brain, mammary gland, adrenal gland, skeletal muscle, small intestine, and kidney, and lower expression in lung, cerebellum, testis, liver, pancreas, bone marrow and ovary.

The protein localises to the membrane. The sequence is that of Cell adhesion molecule CEACAM19 from Homo sapiens (Human).